Consider the following 353-residue polypeptide: Protein RecA (353 aa).

80–87 is a binding site for ATP; sequence GPESSGKT.

This sequence belongs to the RecA family.

It localises to the cytoplasm. Functionally, can catalyze the hydrolysis of ATP in the presence of single-stranded DNA, the ATP-dependent uptake of single-stranded DNA by duplex DNA, and the ATP-dependent hybridization of homologous single-stranded DNAs. It interacts with LexA causing its activation and leading to its autocatalytic cleavage. The polypeptide is Protein RecA (Chlorobium chlorochromatii (strain CaD3)).